Consider the following 200-residue polypeptide: Methyl-coenzyme M reductase I operon protein C (200 aa).

In terms of assembly, MCR is composed of three subunits: alpha, beta, and gamma. The function of proteins C and D is not known.

The polypeptide is Methyl-coenzyme M reductase I operon protein C (mcrC) (Methanocaldococcus jannaschii (strain ATCC 43067 / DSM 2661 / JAL-1 / JCM 10045 / NBRC 100440) (Methanococcus jannaschii)).